The sequence spans 439 residues: Coiled-coil domain-containing protein 166 (439 aa).

A disordered region spans residues 1-28; it reads MAPKKKRGPSAGSQPGGAAAAGAEQPLS. Positions 9–23 are enriched in low complexity; that stretch reads PSAGSQPGGAAAAGA. 2 coiled-coil regions span residues 27–74 and 121–213; these read LSER…EENR and DGVR…VRAL. The disordered stretch occupies residues 276 to 439; sequence PGGPPLWERP…AAAEASPGRA (164 aa). Residues 338–365 show a composition bias toward polar residues; that stretch reads VLSSMDSRVPSLATSKVGSRMPSLTASR. 2 stretches are compositionally biased toward low complexity: residues 376 to 392 and 428 to 439; these read SLEG…RVSS and AEAAAEASPGRA.

This is Coiled-coil domain-containing protein 166 (CCDC166) from Homo sapiens (Human).